The primary structure comprises 234 residues: MLTYETWEEDSMSFSERDETKGALAVLEWAYKQYNDEIVYACSFGVEGMVLLHLINEVNPFAQVVFLDTNVHFCETYALIERVRQRFPKLNIIEKQPGLTLEEQEDKYGKDLWEHNPNLCCKLRKILPLEELLANKNAWISGLRREQSETRKHTKFINQDHRFQSIKICPLIHWTWKEVWRYVYKHNLPYNPLHDVGYPSIGCEKCTLPVGKYGSSRDGRWAGSVKTECGLHDQ.

4 residues coordinate [4Fe-4S] cluster: C120, C121, C203, and C206. C229 serves as the catalytic Nucleophile; cysteine thiosulfonate intermediate.

The protein belongs to the PAPS reductase family. CysH subfamily. [4Fe-4S] cluster is required as a cofactor.

The protein resides in the cytoplasm. It catalyses the reaction [thioredoxin]-disulfide + sulfite + AMP + 2 H(+) = adenosine 5'-phosphosulfate + [thioredoxin]-dithiol. The protein operates within sulfur metabolism; hydrogen sulfide biosynthesis; sulfite from sulfate. In terms of biological role, catalyzes the formation of sulfite from adenosine 5'-phosphosulfate (APS) using thioredoxin as an electron donor. This is Adenosine 5'-phosphosulfate reductase from Bacillus cytotoxicus (strain DSM 22905 / CIP 110041 / 391-98 / NVH 391-98).